The following is a 78-amino-acid chain: Translation initiation factor IF-1, chloroplastic (78 aa).

In terms of domain architecture, S1-like spans 1 to 72; sequence MEKQKLIDME…TKGRITYRLR (72 aa).

This sequence belongs to the IF-1 family. Component of the 30S ribosomal translation pre-initiation complex which assembles on the 30S ribosome in the order IF-2 and IF-3, IF-1 and N-formylmethionyl-tRNA(fMet); mRNA recruitment can occur at any time during PIC assembly.

The protein resides in the plastid. Its subcellular location is the chloroplast. Its function is as follows. One of the essential components for the initiation of protein synthesis. Stabilizes the binding of IF-2 and IF-3 on the 30S subunit to which N-formylmethionyl-tRNA(fMet) subsequently binds. Helps modulate mRNA selection, yielding the 30S pre-initiation complex (PIC). Upon addition of the 50S ribosomal subunit IF-1, IF-2 and IF-3 are released leaving the mature 70S translation initiation complex. The sequence is that of Translation initiation factor IF-1, chloroplastic from Marchantia polymorpha (Common liverwort).